The primary structure comprises 159 residues: Small ribosomal subunit protein uS15 (159 aa).

Residues 1 to 16 show a composition bias toward basic residues; it reads MNKRKEKGKSHSKRPV. The disordered stretch occupies residues 1–22; it reads MNKRKEKGKSHSKRPVRNTPPR.

Belongs to the universal ribosomal protein uS15 family. As to quaternary structure, part of the 30S ribosomal subunit.

The chain is Small ribosomal subunit protein uS15 from Ignicoccus hospitalis (strain KIN4/I / DSM 18386 / JCM 14125).